Consider the following 152-residue polypeptide: 3-dehydroquinate dehydratase (152 aa).

The active-site Proton acceptor is the Tyr26. 3 residues coordinate substrate: Asn78, His84, and Asp91. The Proton donor role is filled by His104. Residues 105–106 (IS) and Arg115 contribute to the substrate site.

The protein belongs to the type-II 3-dehydroquinase family. Homododecamer.

It catalyses the reaction 3-dehydroquinate = 3-dehydroshikimate + H2O. The protein operates within metabolic intermediate biosynthesis; chorismate biosynthesis; chorismate from D-erythrose 4-phosphate and phosphoenolpyruvate: step 3/7. Functionally, catalyzes a trans-dehydration via an enolate intermediate. The polypeptide is 3-dehydroquinate dehydratase (Buchnera aphidicola subsp. Cinara cedri (strain Cc)).